A 66-amino-acid polypeptide reads, in one-letter code: Beta-mammal toxin Co2 (66 aa).

Residues 1–66 (KEGYIVNYHD…VWPLPKKRCN (66 aa)) enclose the LCN-type CS-alpha/beta domain. Disulfide bonds link Cys12–Cys65, Cys16–Cys41, Cys25–Cys46, and Cys29–Cys48.

Expressed by the venom gland.

The protein localises to the secreted. Its function is as follows. Beta toxins bind voltage-independently at site-4 of sodium channels (Nav) and shift the voltage of activation toward more negative potentials thereby affecting sodium channel activation and promoting spontaneous and repetitive firing. This toxin acts on human Nav1.1/SCN1A, Nav1.2/SCN2A, Nav1.4/SCN4A and Nav1.6/SCN8A voltage-gated sodium channels. Also, it reduces the peak of sodium currents in Nav1.5/SCN5A at all potentials. In vivo, is lethal to mice when intraperitoneally injected at a dose of 5ug. No activity is observed when injected into crickets or woodlice. In Centruroides ornatus (Scorpion), this protein is Beta-mammal toxin Co2.